Here is a 766-residue protein sequence, read N- to C-terminus: Phosphoribosylformylglycinamidine synthase subunit PurL (766 aa).

The active site involves histidine 66. 2 residues coordinate ATP: tyrosine 69 and lysine 113. Glutamate 115 lines the Mg(2+) pocket. Substrate-binding positions include 116-119 and arginine 138; that span reads SHNH. Residue histidine 117 is the Proton acceptor of the active site. Aspartate 139 contacts Mg(2+). Position 264 (glutamine 264) interacts with substrate. Aspartate 292 is a Mg(2+) binding site. Substrate is bound at residue 336 to 338; sequence ESQ. The ATP site is built by asparagine 524 and glycine 561. Position 562 (asparagine 562) interacts with Mg(2+). Serine 564 serves as a coordination point for substrate.

It belongs to the FGAMS family. In terms of assembly, monomer. Part of the FGAM synthase complex composed of 1 PurL, 1 PurQ and 2 PurS subunits.

It localises to the cytoplasm. It carries out the reaction N(2)-formyl-N(1)-(5-phospho-beta-D-ribosyl)glycinamide + L-glutamine + ATP + H2O = 2-formamido-N(1)-(5-O-phospho-beta-D-ribosyl)acetamidine + L-glutamate + ADP + phosphate + H(+). It functions in the pathway purine metabolism; IMP biosynthesis via de novo pathway; 5-amino-1-(5-phospho-D-ribosyl)imidazole from N(2)-formyl-N(1)-(5-phospho-D-ribosyl)glycinamide: step 1/2. Functionally, part of the phosphoribosylformylglycinamidine synthase complex involved in the purines biosynthetic pathway. Catalyzes the ATP-dependent conversion of formylglycinamide ribonucleotide (FGAR) and glutamine to yield formylglycinamidine ribonucleotide (FGAM) and glutamate. The FGAM synthase complex is composed of three subunits. PurQ produces an ammonia molecule by converting glutamine to glutamate. PurL transfers the ammonia molecule to FGAR to form FGAM in an ATP-dependent manner. PurS interacts with PurQ and PurL and is thought to assist in the transfer of the ammonia molecule from PurQ to PurL. The polypeptide is Phosphoribosylformylglycinamidine synthase subunit PurL (Mycobacterium tuberculosis (strain CDC 1551 / Oshkosh)).